The primary structure comprises 166 residues: Large ribosomal subunit protein uL10 (166 aa).

The protein belongs to the universal ribosomal protein uL10 family. Part of the ribosomal stalk of the 50S ribosomal subunit. The N-terminus interacts with L11 and the large rRNA to form the base of the stalk. The C-terminus forms an elongated spine to which L12 dimers bind in a sequential fashion forming a multimeric L10(L12)X complex.

Functionally, forms part of the ribosomal stalk, playing a central role in the interaction of the ribosome with GTP-bound translation factors. The sequence is that of Large ribosomal subunit protein uL10 from Azotobacter vinelandii (strain DJ / ATCC BAA-1303).